The following is a 206-amino-acid chain: N-(5'-phosphoribosyl)anthranilate isomerase (206 aa).

This sequence belongs to the TrpF family.

The catalysed reaction is N-(5-phospho-beta-D-ribosyl)anthranilate = 1-(2-carboxyphenylamino)-1-deoxy-D-ribulose 5-phosphate. The protein operates within amino-acid biosynthesis; L-tryptophan biosynthesis; L-tryptophan from chorismate: step 3/5. The protein is N-(5'-phosphoribosyl)anthranilate isomerase of Pseudomonas savastanoi pv. phaseolicola (strain 1448A / Race 6) (Pseudomonas syringae pv. phaseolicola (strain 1448A / Race 6)).